We begin with the raw amino-acid sequence, 246 residues long: Pyridoxine 5'-phosphate synthase (246 aa).

3-amino-2-oxopropyl phosphate is bound at residue Asn9. 11 to 12 (DH) lines the 1-deoxy-D-xylulose 5-phosphate pocket. Arg20 is a 3-amino-2-oxopropyl phosphate binding site. His45 (proton acceptor) is an active-site residue. 1-deoxy-D-xylulose 5-phosphate-binding residues include Arg47 and His52. Glu72 (proton acceptor) is an active-site residue. A 1-deoxy-D-xylulose 5-phosphate-binding site is contributed by Thr102. The active-site Proton donor is the His193. 3-amino-2-oxopropyl phosphate contacts are provided by residues Gly194 and 215 to 216 (GH).

This sequence belongs to the PNP synthase family. In terms of assembly, homooctamer; tetramer of dimers.

The protein resides in the cytoplasm. The catalysed reaction is 3-amino-2-oxopropyl phosphate + 1-deoxy-D-xylulose 5-phosphate = pyridoxine 5'-phosphate + phosphate + 2 H2O + H(+). Its pathway is cofactor biosynthesis; pyridoxine 5'-phosphate biosynthesis; pyridoxine 5'-phosphate from D-erythrose 4-phosphate: step 5/5. Its function is as follows. Catalyzes the complicated ring closure reaction between the two acyclic compounds 1-deoxy-D-xylulose-5-phosphate (DXP) and 3-amino-2-oxopropyl phosphate (1-amino-acetone-3-phosphate or AAP) to form pyridoxine 5'-phosphate (PNP) and inorganic phosphate. The polypeptide is Pyridoxine 5'-phosphate synthase (Colwellia psychrerythraea (strain 34H / ATCC BAA-681) (Vibrio psychroerythus)).